A 159-amino-acid chain; its full sequence is Probable chemoreceptor glutamine deamidase CheD 2 (159 aa).

Belongs to the CheD family.

It carries out the reaction L-glutaminyl-[protein] + H2O = L-glutamyl-[protein] + NH4(+). Its function is as follows. Probably deamidates glutamine residues to glutamate on methyl-accepting chemotaxis receptors (MCPs), playing an important role in chemotaxis. The sequence is that of Probable chemoreceptor glutamine deamidase CheD 2 from Anaeromyxobacter dehalogenans (strain 2CP-C).